The following is a 399-amino-acid chain: MAESVFAERIVQNLLDTDFYKLTMMQAVLHNYPNAEVEWEFRCRNAEDLRPYLAEIRYQIERLAEVEVTADQLAFLERIPFMKPDFIRFLSLFRFNLRYVHTGIEDGQLAIRLRGPWLHVILFEVPLLAIVSEVRNRYRYREVVLEQVGEQLYRKLDWLSAQASSEELAEFQVADFGTRRRFSYRTQEEVVHILKRDFPGRFVGTSNVHLAREYDLKPIGTMAHEWLMAHQQLGPRLVDSQQAALDCWVREYRGQLGIALTDCITMDAFLDDFDLYFAKLFDGLRHDSGDPLAWAEKAIAHYRRLGIDPLSKTLVFSDGLDMPKALQLFRALRGKINVSFGIGTNLTCDIPGVEPMNIVLKMTACNGHPVAKISDAPGKTQCRDENFVAYLRHVFNVPA.

Histidine 224 carries the post-translational modification Phosphohistidine; by autocatalysis.

This sequence belongs to the NAPRTase family. In terms of processing, transiently phosphorylated on a His residue during the reaction cycle. Phosphorylation strongly increases the affinity for substrates and increases the rate of nicotinate D-ribonucleotide production. Dephosphorylation regenerates the low-affinity form of the enzyme, leading to product release.

The catalysed reaction is nicotinate + 5-phospho-alpha-D-ribose 1-diphosphate + ATP + H2O = nicotinate beta-D-ribonucleotide + ADP + phosphate + diphosphate. The protein operates within cofactor biosynthesis; NAD(+) biosynthesis; nicotinate D-ribonucleotide from nicotinate: step 1/1. Functionally, catalyzes the synthesis of beta-nicotinate D-ribonucleotide from nicotinate and 5-phospho-D-ribose 1-phosphate at the expense of ATP. In Pseudomonas aeruginosa (strain ATCC 15692 / DSM 22644 / CIP 104116 / JCM 14847 / LMG 12228 / 1C / PRS 101 / PAO1), this protein is Nicotinate phosphoribosyltransferase 1.